Reading from the N-terminus, the 478-residue chain is Probable serine protease do-like (478 aa).

An N-terminal signal peptide occupies residues Met-1–Asn-26. An intrachain disulfide couples Cys-87 to Cys-99. The interval Gly-116–Thr-254 is serine protease. Catalysis depends on charge relay system residues His-133, Asp-163, and Ser-238. 2 PDZ domains span residues Gln-281–Glu-372 and Lys-387–Gly-469.

This sequence belongs to the peptidase S1C family.

This is Probable serine protease do-like (degP) from Buchnera aphidicola subsp. Acyrthosiphon pisum (strain APS) (Acyrthosiphon pisum symbiotic bacterium).